The primary structure comprises 494 residues: Glycogen synthase (494 aa).

Position 15 (lysine 15) interacts with ADP-alpha-D-glucose.

Belongs to the glycosyltransferase 1 family. Bacterial/plant glycogen synthase subfamily.

It carries out the reaction [(1-&gt;4)-alpha-D-glucosyl](n) + ADP-alpha-D-glucose = [(1-&gt;4)-alpha-D-glucosyl](n+1) + ADP + H(+). It functions in the pathway glycan biosynthesis; glycogen biosynthesis. In terms of biological role, synthesizes alpha-1,4-glucan chains using ADP-glucose. The sequence is that of Glycogen synthase from Albidiferax ferrireducens (strain ATCC BAA-621 / DSM 15236 / T118) (Rhodoferax ferrireducens).